The primary structure comprises 318 residues: GTP 3',8-cyclase (318 aa).

A Radical SAM core domain is found at 5–217 (KFERKIDYIR…DKIAKKYKFK (213 aa)). GTP is bound at residue Arg14. The [4Fe-4S] cluster site is built by Cys21 and Cys25. Tyr27 contacts S-adenosyl-L-methionine. Cys28 contacts [4Fe-4S] cluster. Arg64 is a GTP binding site. Gly68 lines the S-adenosyl-L-methionine pocket. GTP is bound at residue Thr95. Residue Ser119 coordinates S-adenosyl-L-methionine. Lys155 is a GTP binding site. Residue Met189 participates in S-adenosyl-L-methionine binding. [4Fe-4S] cluster contacts are provided by Cys248 and Cys251. 253-255 (RIR) lines the GTP pocket. Cys265 contacts [4Fe-4S] cluster.

This sequence belongs to the radical SAM superfamily. MoaA family. Monomer and homodimer. [4Fe-4S] cluster is required as a cofactor.

The catalysed reaction is GTP + AH2 + S-adenosyl-L-methionine = (8S)-3',8-cyclo-7,8-dihydroguanosine 5'-triphosphate + 5'-deoxyadenosine + L-methionine + A + H(+). The protein operates within cofactor biosynthesis; molybdopterin biosynthesis. Catalyzes the cyclization of GTP to (8S)-3',8-cyclo-7,8-dihydroguanosine 5'-triphosphate. This chain is GTP 3',8-cyclase, found in Nautilia profundicola (strain ATCC BAA-1463 / DSM 18972 / AmH).